A 29-amino-acid polypeptide reads, in one-letter code: Brevinin-2Rd (29 aa).

A disulfide bridge connects residues Cys23 and Cys29.

Expressed by the skin glands.

It is found in the secreted. Antimicrobial peptide. In Pelophylax ridibundus (Marsh frog), this protein is Brevinin-2Rd.